The chain runs to 78 residues: Large ribosomal subunit protein bL28 (78 aa).

This sequence belongs to the bacterial ribosomal protein bL28 family.

This is Large ribosomal subunit protein bL28 from Glaesserella parasuis serovar 5 (strain SH0165) (Haemophilus parasuis).